The chain runs to 423 residues: Phospholipase A1-IIalpha (423 aa).

Positions 194 to 217 (SAQEQVQGELKRLLELYKDEEISI) form a coiled coil. The active-site Acyl-ester intermediate is the serine 223. Catalysis depends on charge relay system residues serine 223, aspartate 290, and histidine 327. Residues 399 to 423 (HDDDVDADDNDDSSTSNQLQELNTD) form a disordered region. The span at 401–410 (DDVDADDNDD) shows a compositional bias: acidic residues. Residues 411-423 (SSTSNQLQELNTD) are compositionally biased toward polar residues.

The protein belongs to the AB hydrolase superfamily. Lipase family.

The protein resides in the cytoplasm. Its function is as follows. Acylhydrolase that catalyzes the hydrolysis of phospholipids at the sn-1 position. The sequence is that of Phospholipase A1-IIalpha from Arabidopsis thaliana (Mouse-ear cress).